We begin with the raw amino-acid sequence, 219 residues long: MHFADIPLSKPCLNNPPTYPWSSPILSSIANPSLCDIVSSPSSVSSFASSDDFAFMNAYCLPIQQNHQFGSPVAASPNQQPLVESQNRRNVTYASLVIGKLGIAQLIRQQTDPPQIIHRKQDKGLMARVLSRSKKQEERENHSSDARDAIKSALRRRMRRREGRVQKALRPTPNLICSKCNTTFNHSTALMMHEATCLNQVPFKLSDFFVEDVIDDWLF.

A zinc finger lies at 177–197 (CSKCNTTFNHSTALMMHEATC).

Its function is as follows. Transcriptional activator which interacts with the mcb binding subunit complex formed by res2 and cdc10. Rep2 is required for the mitotic cell cycle start. The chain is Transcriptional activator protein rep2 (rep2) from Schizosaccharomyces pombe (strain 972 / ATCC 24843) (Fission yeast).